A 277-amino-acid chain; its full sequence is Methyltransferase str3 (277 aa).

The protein belongs to the methyltransferase superfamily. LaeA methyltransferase family.

It functions in the pathway mycotoxin biosynthesis. Its function is as follows. Methyltransferase; part of the gene cluster that mediates the biosynthesis of strobilurin A, an antifungal polyketide that contains a key beta-methoxyacrylate toxophore that targets the complex III of the mitochondrial electron transport chain. Strobilurin biosynthesis begins with construction of benzoyl CoA by step-wise elimination of ammonia from phenylalanine by the phenylalanine ammonia-lyase str11, oxygenation by str8 and retro-Claisen reaction to form benzoic acid, which is activated to its CoA thiolester benzoyl CoA by the dedicated CoA ligase str10. Benzoyl CoA forms the starter unit for the highly reducing polyketide synthase stpks1 that produces the polyketide prestrobilutin A. The FAD-dependent oxygenase str9 then catalyzes the key oxidative rearrangement responsible for the creation of the beta-methoxyacrylate toxophore. Str9 performs epoxidation of the 2,3 olefin of prestrobilutin A, followed by Meinwald rearrangement to furnish the aldehyde intermediate. Rapid enolization of the aldehyde intermediate would give the beta-methoxyacrylate skeleton and methylations catalyzed by str2 and str3 complete the synthesis and lead to the production of strobilurin A. The short-chain dehydrogenase stl2 and the dehydrogenase str4 play a role in the shunt pathway leading to the production of bolineol. The cluster encodes no obvious halogenase gene that could be involved in production of strobilurin B, nor any obvious dimethylallyl-transferase that could be involved in the production of strobilurin G. It is possible that unknown proteins encoded in, or near, the cluster (such as str1 or stl1) may form new classes of halogenases or dimethylally-transferases, or that the responsible genes are located elsewhere on the genome. Similarly, proteins encoded by str5/str6 hydrolases appear to have no chemical role in the biosynthesis of strobilurin A. Finally, no obvious self-resistance gene is found within the cluster. The protein is Methyltransferase str3 of Strobilurus tenacellus.